The chain runs to 263 residues: Ribosomal RNA small subunit methyltransferase A (263 aa).

N13, T15, G40, E61, D85, and N105 together coordinate S-adenosyl-L-methionine.

It belongs to the class I-like SAM-binding methyltransferase superfamily. rRNA adenine N(6)-methyltransferase family. RsmA subfamily.

It localises to the cytoplasm. It carries out the reaction adenosine(1518)/adenosine(1519) in 16S rRNA + 4 S-adenosyl-L-methionine = N(6)-dimethyladenosine(1518)/N(6)-dimethyladenosine(1519) in 16S rRNA + 4 S-adenosyl-L-homocysteine + 4 H(+). Functionally, specifically dimethylates two adjacent adenosines (A1518 and A1519) in the loop of a conserved hairpin near the 3'-end of 16S rRNA in the 30S particle. May play a critical role in biogenesis of 30S subunits. The protein is Ribosomal RNA small subunit methyltransferase A of Mycoplasma pneumoniae (strain ATCC 29342 / M129 / Subtype 1) (Mycoplasmoides pneumoniae).